A 246-amino-acid polypeptide reads, in one-letter code: Electron transfer flavoprotein beta subunit lysine methyltransferase (246 aa).

The protein belongs to the methyltransferase superfamily. ETFBKMT family.

It is found in the cytoplasm. The protein resides in the mitochondrion matrix. The enzyme catalyses L-lysyl-[protein] + 3 S-adenosyl-L-methionine = N(6),N(6),N(6)-trimethyl-L-lysyl-[protein] + 3 S-adenosyl-L-homocysteine + 3 H(+). Its function is as follows. Protein-lysine methyltransferase that selectively trimethylates the flavoprotein ETFB in mitochondria. Thereby, may negatively regulate the function of ETFB in electron transfer from Acyl-CoA dehydrogenases to the main respiratory chain. In Xenopus laevis (African clawed frog), this protein is Electron transfer flavoprotein beta subunit lysine methyltransferase (etfbkmt).